The sequence spans 115 residues: Large ribosomal subunit protein uL22 (115 aa).

This sequence belongs to the universal ribosomal protein uL22 family. In terms of assembly, part of the 50S ribosomal subunit.

In terms of biological role, this protein binds specifically to 23S rRNA; its binding is stimulated by other ribosomal proteins, e.g. L4, L17, and L20. It is important during the early stages of 50S assembly. It makes multiple contacts with different domains of the 23S rRNA in the assembled 50S subunit and ribosome. Functionally, the globular domain of the protein is located near the polypeptide exit tunnel on the outside of the subunit, while an extended beta-hairpin is found that lines the wall of the exit tunnel in the center of the 70S ribosome. This chain is Large ribosomal subunit protein uL22, found in Enterococcus faecalis (strain ATCC 700802 / V583).